The sequence spans 215 residues: UPF0502 protein Shal_1801 (215 aa).

Belongs to the UPF0502 family.

The sequence is that of UPF0502 protein Shal_1801 from Shewanella halifaxensis (strain HAW-EB4).